The chain runs to 299 residues: ATP phosphoribosyltransferase (299 aa).

It belongs to the ATP phosphoribosyltransferase family. Long subfamily. Mg(2+) serves as cofactor.

The protein resides in the cytoplasm. The catalysed reaction is 1-(5-phospho-beta-D-ribosyl)-ATP + diphosphate = 5-phospho-alpha-D-ribose 1-diphosphate + ATP. Its pathway is amino-acid biosynthesis; L-histidine biosynthesis; L-histidine from 5-phospho-alpha-D-ribose 1-diphosphate: step 1/9. With respect to regulation, feedback inhibited by histidine. Its function is as follows. Catalyzes the condensation of ATP and 5-phosphoribose 1-diphosphate to form N'-(5'-phosphoribosyl)-ATP (PR-ATP). Has a crucial role in the pathway because the rate of histidine biosynthesis seems to be controlled primarily by regulation of HisG enzymatic activity. This Pasteurella multocida (strain Pm70) protein is ATP phosphoribosyltransferase (hisG).